The following is a 340-amino-acid chain: Uroporphyrinogen decarboxylase (340 aa).

Residues 21 to 25 (RQAGR), D71, Y148, S203, and H316 each bind substrate.

This sequence belongs to the uroporphyrinogen decarboxylase family. Homodimer.

The protein localises to the cytoplasm. It carries out the reaction uroporphyrinogen III + 4 H(+) = coproporphyrinogen III + 4 CO2. The protein operates within porphyrin-containing compound metabolism; protoporphyrin-IX biosynthesis; coproporphyrinogen-III from 5-aminolevulinate: step 4/4. In terms of biological role, catalyzes the decarboxylation of four acetate groups of uroporphyrinogen-III to yield coproporphyrinogen-III. This chain is Uroporphyrinogen decarboxylase, found in Campylobacter lari (strain RM2100 / D67 / ATCC BAA-1060).